A 439-amino-acid polypeptide reads, in one-letter code: Methylenetetrahydrofolate--tRNA-(uracil-5-)-methyltransferase TrmFO (439 aa).

Residue 8–13 (GGGLAG) coordinates FAD.

Belongs to the MnmG family. TrmFO subfamily. The cofactor is FAD.

It is found in the cytoplasm. The enzyme catalyses uridine(54) in tRNA + (6R)-5,10-methylene-5,6,7,8-tetrahydrofolate + NADH + H(+) = 5-methyluridine(54) in tRNA + (6S)-5,6,7,8-tetrahydrofolate + NAD(+). The catalysed reaction is uridine(54) in tRNA + (6R)-5,10-methylene-5,6,7,8-tetrahydrofolate + NADPH + H(+) = 5-methyluridine(54) in tRNA + (6S)-5,6,7,8-tetrahydrofolate + NADP(+). Functionally, catalyzes the folate-dependent formation of 5-methyl-uridine at position 54 (M-5-U54) in all tRNAs. In Dictyoglomus thermophilum (strain ATCC 35947 / DSM 3960 / H-6-12), this protein is Methylenetetrahydrofolate--tRNA-(uracil-5-)-methyltransferase TrmFO.